A 375-amino-acid chain; its full sequence is Queuine tRNA-ribosyltransferase (375 aa).

Residue Asp90 is the Proton acceptor of the active site. Substrate contacts are provided by residues 90 to 94 (DSGGF), Asp144, Gln190, and Gly217. Residues 248–254 (GIGTPHY) form an RNA binding region. Asp267 acts as the Nucleophile in catalysis. An RNA binding; important for wobble base 34 recognition region spans residues 272-276 (ARITR). Residues Cys305, Cys307, Cys310, and His336 each coordinate Zn(2+).

This sequence belongs to the queuine tRNA-ribosyltransferase family. As to quaternary structure, homodimer. Within each dimer, one monomer is responsible for RNA recognition and catalysis, while the other monomer binds to the replacement base PreQ1. Zn(2+) serves as cofactor.

The catalysed reaction is 7-aminomethyl-7-carbaguanine + guanosine(34) in tRNA = 7-aminomethyl-7-carbaguanosine(34) in tRNA + guanine. It functions in the pathway tRNA modification; tRNA-queuosine biosynthesis. Catalyzes the base-exchange of a guanine (G) residue with the queuine precursor 7-aminomethyl-7-deazaguanine (PreQ1) at position 34 (anticodon wobble position) in tRNAs with GU(N) anticodons (tRNA-Asp, -Asn, -His and -Tyr). Catalysis occurs through a double-displacement mechanism. The nucleophile active site attacks the C1' of nucleotide 34 to detach the guanine base from the RNA, forming a covalent enzyme-RNA intermediate. The proton acceptor active site deprotonates the incoming PreQ1, allowing a nucleophilic attack on the C1' of the ribose to form the product. After dissociation, two additional enzymatic reactions on the tRNA convert PreQ1 to queuine (Q), resulting in the hypermodified nucleoside queuosine (7-(((4,5-cis-dihydroxy-2-cyclopenten-1-yl)amino)methyl)-7-deazaguanosine). The polypeptide is Queuine tRNA-ribosyltransferase (Borreliella burgdorferi (strain ZS7) (Borrelia burgdorferi)).